The sequence spans 511 residues: 2-isopropylmalate synthase (511 aa).

The 263-residue stretch at 5-267 (LFIFDTTLRD…DTRIDATQIV (263 aa)) folds into the Pyruvate carboxyltransferase domain. Asp-14, His-202, His-204, and Asn-238 together coordinate Mn(2+). A regulatory domain region spans residues 393-511 (KLLSMKVCSE…SKRERAHPQV (119 aa)).

Belongs to the alpha-IPM synthase/homocitrate synthase family. LeuA type 1 subfamily. Homodimer. Mn(2+) serves as cofactor.

Its subcellular location is the cytoplasm. It carries out the reaction 3-methyl-2-oxobutanoate + acetyl-CoA + H2O = (2S)-2-isopropylmalate + CoA + H(+). It participates in amino-acid biosynthesis; L-leucine biosynthesis; L-leucine from 3-methyl-2-oxobutanoate: step 1/4. Catalyzes the condensation of the acetyl group of acetyl-CoA with 3-methyl-2-oxobutanoate (2-ketoisovalerate) to form 3-carboxy-3-hydroxy-4-methylpentanoate (2-isopropylmalate). The protein is 2-isopropylmalate synthase of Thiobacillus denitrificans (strain ATCC 25259 / T1).